The primary structure comprises 228 residues: MKNLIQFMTRVPIKGDFEKAREEVWMLPLLTPLTAFIPSLILYLNIPLKNVLSILSLYWVIGLLHLDGLADWADGIMVKGDREKKVRAMKDVNTGIAGTFAVVMILLIQVYSLFSAPFYSIYLAELNSKMAMLLALATKKPLGEGLGKYFMDKLTTKRVFLGGVLYALLLIPILLYDPQSIFALLGLVGGIYAVKISLDNFGGLNGDCIGAVGEITRGATLLILGVWA.

6 helical membrane passes run 24-44 (VWML…ILYL), 50-70 (NVLS…DGLA), 96-116 (IAGT…LFSA), 117-137 (PFYS…LALA), 159-176 (VFLG…ILLY), and 181-198 (IFAL…KISL).

The protein belongs to the CobS family. Requires Mg(2+) as cofactor.

It is found in the cell membrane. It catalyses the reaction alpha-ribazole + adenosylcob(III)inamide-GDP = adenosylcob(III)alamin + GMP + H(+). The catalysed reaction is alpha-ribazole 5'-phosphate + adenosylcob(III)inamide-GDP = adenosylcob(III)alamin 5'-phosphate + GMP + H(+). Its pathway is cofactor biosynthesis; adenosylcobalamin biosynthesis; adenosylcobalamin from cob(II)yrinate a,c-diamide: step 7/7. Joins adenosylcobinamide-GDP and alpha-ribazole to generate adenosylcobalamin (Ado-cobalamin). Also synthesizes adenosylcobalamin 5'-phosphate from adenosylcobinamide-GDP and alpha-ribazole 5'-phosphate. This is Adenosylcobinamide-GDP ribazoletransferase from Pyrococcus furiosus (strain ATCC 43587 / DSM 3638 / JCM 8422 / Vc1).